The sequence spans 121 residues: T cell receptor alpha variable 23/delta variable 6 (121 aa).

An N-terminal signal peptide occupies residues 1–21 (MDKILGASFLVLWLQLCWVSG). In terms of domain architecture, Ig-like spans 30–121 (QQVKQSPQSL…DSATYFCAAS (92 aa)). The cysteines at positions 51 and 118 are disulfide-linked. N95 is a glycosylation site (N-linked (GlcNAc...) asparagine).

Alpha-beta TR is a heterodimer composed of an alpha and beta chain; disulfide-linked. The alpha-beta TR is associated with the transmembrane signaling CD3 coreceptor proteins to form the TR-CD3 (TcR or TCR). The assembly of alpha-beta TR heterodimers with CD3 occurs in the endoplasmic reticulum where a single alpha-beta TR heterodimer associates with one CD3D-CD3E heterodimer, one CD3G-CD3E heterodimer and one CD247 homodimer forming a stable octameric structure. CD3D-CD3E and CD3G-CD3E heterodimers preferentially associate with TR alpha and TR beta chains, respectively. The association of the CD247 homodimer is the last step of TcR assembly in the endoplasmic reticulum and is required for transport to the cell surface.

It is found in the cell membrane. Its function is as follows. V region of the variable domain of T cell receptor (TR) alpha chain that participates in the antigen recognition. Alpha-beta T cell receptors are antigen specific receptors which are essential to the immune response and are present on the cell surface of T lymphocytes. Recognize peptide-major histocompatibility (MH) (pMH) complexes that are displayed by antigen presenting cells (APC), a prerequisite for efficient T cell adaptive immunity against pathogens. Binding of alpha-beta TR to pMH complex initiates TR-CD3 clustering on the cell surface and intracellular activation of LCK that phosphorylates the ITAM motifs of CD3G, CD3D, CD3E and CD247 enabling the recruitment of ZAP70. In turn ZAP70 phosphorylates LAT, which recruits numerous signaling molecules to form the LAT signalosome. The LAT signalosome propagates signal branching to three major signaling pathways, the calcium, the mitogen-activated protein kinase (MAPK) kinase and the nuclear factor NF-kappa-B (NF-kB) pathways, leading to the mobilization of transcription factors that are critical for gene expression and essential for T cell growth and differentiation. The T cell repertoire is generated in the thymus, by V-(D)-J rearrangement. This repertoire is then shaped by intrathymic selection events to generate a peripheral T cell pool of self-MH restricted, non-autoaggressive T cells. Post-thymic interaction of alpha-beta TR with the pMH complexes shapes TR structural and functional avidity. The sequence is that of T cell receptor alpha variable 23/delta variable 6 from Homo sapiens (Human).